The primary structure comprises 95 residues: Defensin alpha 4 (95 aa).

An N-terminal signal peptide occupies residues 1–19 (MRTLALLAAILLVALQAQA). The propeptide occupies 20-62 (EHISVSIDEVVDQQPPQAEDQDVAIYVKEHESSALEALGVKAG). Cystine bridges form between cysteine 65–cysteine 93, cysteine 67–cysteine 82, and cysteine 72–cysteine 92.

It belongs to the alpha-defensin family.

It is found in the secreted. Its function is as follows. Host-defense peptide that has antimicrobial activity. Inhibits corticotropin (ACTH)-stimulated corticosterone production (in vitro). This chain is Defensin alpha 4, found in Oryctolagus cuniculus (Rabbit).